We begin with the raw amino-acid sequence, 267 residues long: Undecaprenyl-diphosphatase (267 aa).

7 helical membrane passes run 1–21 (MSLF…FLPI), 40–60 (GQAI…LYFW), 85–105 (LAFL…FLEV), 112–132 (LRSI…LYWA), 189–209 (AMLM…AEVI), 219–239 (DGAI…TLMF), and 245–265 (VSFT…LVIA).

The protein belongs to the UppP family.

The protein localises to the cell inner membrane. The enzyme catalyses di-trans,octa-cis-undecaprenyl diphosphate + H2O = di-trans,octa-cis-undecaprenyl phosphate + phosphate + H(+). Its function is as follows. Catalyzes the dephosphorylation of undecaprenyl diphosphate (UPP). Confers resistance to bacitracin. The polypeptide is Undecaprenyl-diphosphatase (Jannaschia sp. (strain CCS1)).